Reading from the N-terminus, the 366-residue chain is Growth/differentiation factor 3 (366 aa).

Residues 1–22 (MQPYQRLLALGFLLLTLPWGQT) form the signal peptide. The propeptide occupies 23–252 (SEFQDSDLLQ…HCHPSSRKRR (230 aa)). 2 N-linked (GlcNAc...) asparagine glycosylation sites follow: asparagine 113 and asparagine 308. Cystine bridges form between cysteine 266-cysteine 331, cysteine 295-cysteine 363, and cysteine 299-cysteine 365.

It belongs to the TGF-beta family. As to quaternary structure, homodimer. Heterodimer (Potential). But, in contrast to other members of this family, cannot be disulfide-linked. Synthesized as large precursor molecule that undergo proteolytic cleavage, releasing the pro-domain from the active, receptor binding, C-terminal region of the molecule. As to expression, primarily in adult bone marrow, spleen, thymus and adipose tissue.

The protein localises to the secreted. The protein resides in the cytoplasm. Its function is as follows. Growth factor involved in early embryonic development and adipose-tissue homeostasis. During embryogenesis controls formation of anterior visceral endoderm and mesoderm and the establishment of anterior-posterior identity through a receptor complex comprising the receptor ACVR1B and the coreceptor CRIPTO. Regulates adipose-tissue homeostasis and energy balance under nutrient overload in part by signaling through the receptor complex based on ACVR1C and CRIPTO. This is Growth/differentiation factor 3 (Gdf3) from Mus musculus (Mouse).